The sequence spans 608 residues: Granule-bound starch synthase 1, chloroplastic/amyloplastic (608 aa).

A chloroplast-targeting transit peptide spans 1 to 78; the sequence is MATVIAAHFV…NGRPAAKIIC (78 aa). Lys96 contributes to the ADP-alpha-D-glucose binding site. A disordered region spans residues 587-608; the sequence is GSEPGTEGEEIAPLAKENVPTP.

Belongs to the glycosyltransferase 1 family. Bacterial/plant glycogen synthase subfamily. As to expression, synthesized in a number of different organs, but most abundantly in tubers.

It is found in the plastid. The protein resides in the chloroplast. Its subcellular location is the amyloplast. The enzyme catalyses an NDP-alpha-D-glucose + [(1-&gt;4)-alpha-D-glucosyl](n) = [(1-&gt;4)-alpha-D-glucosyl](n+1) + a ribonucleoside 5'-diphosphate + H(+). It functions in the pathway glycan biosynthesis; starch biosynthesis. Functionally, responsible for the synthesis of amylose in reserve starch. In Manihot esculenta (Cassava), this protein is Granule-bound starch synthase 1, chloroplastic/amyloplastic (WAXY).